The following is a 961-amino-acid chain: Transcription factor MYB3R-4 (961 aa).

A disordered region spans residues 1-33 (MEAESSTPQERIPKLRHGRTSGPARRSTRGQWT). HTH myb-type domains follow at residues 24–75 (ARRS…QKVL), 76–131 (NPEL…NPAI), and 132–182 (NKEA…KKKL). 3 consecutive DNA-binding regions (H-T-H motif) follow at residues 52 to 75 (WKKIAEYFKDRTDVQCLHRWQKVL), 104 to 127 (WSTIARFLPGRIGKQCRERWHNHL), and 155 to 178 (WAELTKFLPGRSDNGIKNHWHSSV). Disordered regions lie at residues 390–457 (GHSV…LIIS) and 534–555 (RPHSLPKHEPNMTNEQHHEDMG). Polar residues-rich tracts occupy residues 391–405 (HSVSRSLTQEPNEFN) and 416–430 (SSASDRQISEATKSP). A compositionally biased stretch (low complexity) spans 431–444 (TQSSSSRFTATAAS). The segment covering 534 to 554 (RPHSLPKHEPNMTNEQHHEDM) has biased composition (basic and acidic residues). Positions 612–619 (GKKTLVGA) match the Nuclear localization signal motif. The segment at 756 to 781 (NTGKPVLSTPGQSVTKAEKAQVSTPR) is disordered. A compositionally biased stretch (polar residues) spans 764 to 781 (TPGQSVTKAEKAQVSTPR).

Component of a DREAM-like complex which modulates a variety of developmentally regulated genes and of the mitotic genes in proliferating and differentiated cells. Associates with CDKA-1, RBR1 and E2FB, but not with E2FC, in proliferating cells, at early stages of leaves development. In terms of tissue distribution, expressed in roots, cotyledons and leaves, especially in vascular tissues, and in flowers.

It is found in the nucleus. Functionally, transcription factor that binds 5'-AACGG-3' motifs in gene promoters. Involved in the regulation of cytokinesis, probably via the activation of several G2/M phase-specific genes transcription (e.g. KNOLLE). Required for the maintenance of diploidy. Its function is as follows. Involved in transcription regulation during induced endoreduplication at the powdery mildew (e.g. G.orontii) infection site, thus promoting G.orontii growth and reproduction. The sequence is that of Transcription factor MYB3R-4 from Arabidopsis thaliana (Mouse-ear cress).